Reading from the N-terminus, the 163-residue chain is Endoribonuclease YbeY (163 aa).

Zn(2+)-binding residues include His-116, His-120, and His-126.

The protein belongs to the endoribonuclease YbeY family. Zn(2+) serves as cofactor.

The protein resides in the cytoplasm. Its function is as follows. Single strand-specific metallo-endoribonuclease involved in late-stage 70S ribosome quality control and in maturation of the 3' terminus of the 16S rRNA. The chain is Endoribonuclease YbeY from Idiomarina loihiensis (strain ATCC BAA-735 / DSM 15497 / L2-TR).